Here is a 156-residue protein sequence, read N- to C-terminus: Ribosomal RNA large subunit methyltransferase H (156 aa).

S-adenosyl-L-methionine-binding positions include Leu73, Gly104, and 123-128 (LSSLTL).

It belongs to the RNA methyltransferase RlmH family. Homodimer.

Its subcellular location is the cytoplasm. It carries out the reaction pseudouridine(1915) in 23S rRNA + S-adenosyl-L-methionine = N(3)-methylpseudouridine(1915) in 23S rRNA + S-adenosyl-L-homocysteine + H(+). Specifically methylates the pseudouridine at position 1915 (m3Psi1915) in 23S rRNA. This is Ribosomal RNA large subunit methyltransferase H from Ralstonia pickettii (strain 12J).